A 930-amino-acid polypeptide reads, in one-letter code: Kinesin-like protein KIN-7J (930 aa).

A Kinesin motor domain is found at 9-273; sequence KILVSVRVRP…TLGTVIRKLR (265 aa). 95–102 serves as a coordination point for ATP; the sequence is GQTSSGKT. Disordered stretches follow at residues 449 to 569 and 655 to 686; these read LKNS…IGTD and MQTK…SLKD. The segment covering 459–468 has biased composition (low complexity); sequence SVEAQESQES. Composition is skewed to basic and acidic residues over residues 473-482 and 533-558; these read EQMKNEERKM and AKLD…KDCN. Low complexity predominate over residues 666-681; sequence TSSISFDSGSSTSIDT. Lysine 805 is covalently cross-linked (Glycyl lysine isopeptide (Lys-Gly) (interchain with G-Cter in ubiquitin)).

Belongs to the TRAFAC class myosin-kinesin ATPase superfamily. Kinesin family. KIN-7 subfamily.

The polypeptide is Kinesin-like protein KIN-7J (Arabidopsis thaliana (Mouse-ear cress)).